A 142-amino-acid chain; its full sequence is Two-component response regulator ARR22 (142 aa).

One can recognise a Response regulatory domain in the interval 23 to 140 (NVLIVDDDPL…KIFPLISHLF (118 aa)). At aspartate 74 the chain carries 4-aspartylphosphate.

Belongs to the ARR family. Type-A subfamily. Post-translationally, two-component system major event consists of a His-to-Asp phosphorelay between a sensor histidine kinase (HK) and a response regulator (RR). In plants, the His-to-Asp phosphorelay involves an additional intermediate named Histidine-containing phosphotransfer protein (HPt). This multistep phosphorelay consists of a His-Asp-His-Asp sequential transfer of a phosphate group between first a His and an Asp of the HK protein, followed by the transfer to a conserved His of the HPt protein and finally the transfer to an Asp in the receiver domain of the RR protein.

It localises to the nucleus. Functionally, functions as a response regulator involved in His-to-Asp phosphorelay signal transduction system. Phosphorylation of the Asp residue in the receiver domain activates the ability of the protein to promote the transcription of target genes. Type-A response regulators seem to act as negative regulators of the cytokinin signaling. The protein is Two-component response regulator ARR22 (ARR22) of Arabidopsis thaliana (Mouse-ear cress).